Consider the following 121-residue polypeptide: Holo-[acyl-carrier-protein] synthase (121 aa).

Residues Asp-5 and Glu-50 each contribute to the Mg(2+) site.

This sequence belongs to the P-Pant transferase superfamily. AcpS family. Mg(2+) serves as cofactor.

The protein localises to the cytoplasm. It carries out the reaction apo-[ACP] + CoA = holo-[ACP] + adenosine 3',5'-bisphosphate + H(+). In terms of biological role, transfers the 4'-phosphopantetheine moiety from coenzyme A to a Ser of acyl-carrier-protein. The chain is Holo-[acyl-carrier-protein] synthase from Sulfurimonas denitrificans (strain ATCC 33889 / DSM 1251) (Thiomicrospira denitrificans (strain ATCC 33889 / DSM 1251)).